The sequence spans 979 residues: Oncostatin-M-specific receptor subunit beta (979 aa).

An N-terminal signal peptide occupies residues 1-27; sequence MALFAVFQTTFFLTLLSLRTYQSEVLA. Topologically, residues 28–740 are extracellular; sequence ERLPLTPVSL…VTTPDEHSSM (713 aa). N-linked (GlcNAc...) asparagine glycosylation occurs at asparagine 163. Cysteine 245 and cysteine 255 are oxidised to a cystine. Residues asparagine 326 and asparagine 380 are each glycosylated (N-linked (GlcNAc...) asparagine). Fibronectin type-III domains lie at 335 to 428, 433 to 528, 529 to 623, and 625 to 736; these read NPFS…TLEA, APDV…DPEN, KEVE…SQEL, and PSDN…TPDE. A WSXWS motif motif is present at residues 415–419; sequence WSEWS. N-linked (GlcNAc...) asparagine glycans are attached at residues asparagine 446 and asparagine 580. A helical transmembrane segment spans residues 741–761; sequence LIHILLPMVFCVLLIMVMCYL. Over 762–979 the chain is Cytoplasmic; it reads KSQWIKETCY…TLLDPGEHYC (218 aa). Residues 770-778 carry the Box 1 motif motif; that stretch reads CYPDIPDPY. Phosphoserine occurs at positions 826 and 889.

This sequence belongs to the type I cytokine receptor family. Type 2 subfamily. In terms of assembly, heterodimer composed of OSMR and IL6ST (type II OSM receptor). Heterodimer with IL31RA to form the IL31 receptor. As to expression, expressed in keratinocytes (at protein level). Expressed at relatively high levels in all neural cells as well as fibroblast and epithelial cells.

It is found in the membrane. Its function is as follows. Associates with IL31RA to form the IL31 receptor. Binds IL31 to activate STAT3 and possibly STAT1 and STAT5. Capable of transducing OSM-specific signaling events. The sequence is that of Oncostatin-M-specific receptor subunit beta (OSMR) from Homo sapiens (Human).